We begin with the raw amino-acid sequence, 651 residues long: Protein transport protein SEC9 (651 aa).

3 disordered regions span residues Met-1–Asp-22, Ala-53–Met-299, and Arg-313–Glu-332. Ser-79 and Ser-92 each carry phosphoserine. The span at Asn-86–Gln-112 shows a compositional bias: polar residues. Residues Asp-120–Tyr-129 are compositionally biased toward basic and acidic residues. Polar residues-rich tracts occupy residues Gly-157–Gln-218 and Asp-244–Tyr-284. Phosphoserine occurs at positions 186, 190, 213, 271, and 273. A compositionally biased stretch (low complexity) spans Ser-285–Gln-296. The span at Arg-313–Glu-327 shows a compositional bias: basic and acidic residues. Ser-315 bears the Phosphoserine mark. The residue at position 355 (Thr-355) is a Phosphothreonine. Ser-359 is subject to Phosphoserine. T-SNARE coiled-coil homology domains are found at residues Lys-434–Leu-496 and Asp-588–Ile-650.

This sequence belongs to the SNAP-25 family. In terms of assembly, interacts with SRO7 and SRO77.

Component of a SNARE complex that may be the effector of SEC4 function in exocytosis. This Saccharomyces cerevisiae (strain ATCC 204508 / S288c) (Baker's yeast) protein is Protein transport protein SEC9 (SEC9).